A 104-amino-acid chain; its full sequence is Large ribosomal subunit protein bL21 (104 aa).

It belongs to the bacterial ribosomal protein bL21 family. Part of the 50S ribosomal subunit. Contacts protein L20.

Its function is as follows. This protein binds to 23S rRNA in the presence of protein L20. The polypeptide is Large ribosomal subunit protein bL21 (Helicobacter pylori (strain J99 / ATCC 700824) (Campylobacter pylori J99)).